The following is a 21-amino-acid chain: Large ribosomal subunit protein uL10 (21 aa).

This sequence belongs to the universal ribosomal protein uL10 family. In terms of assembly, part of the ribosomal stalk of the 50S ribosomal subunit. The N-terminus interacts with L11 and the large rRNA to form the base of the stalk. The C-terminus forms an elongated spine to which L12 dimers bind in a sequential fashion forming a multimeric L10(L12)X complex.

Its function is as follows. Forms part of the ribosomal stalk, playing a central role in the interaction of the ribosome with GTP-bound translation factors. The sequence is that of Large ribosomal subunit protein uL10 (rplJ) from Bacillus cereus.